Consider the following 96-residue polypeptide: ESAT-6-like protein SAG0230 (96 aa).

This sequence belongs to the WXG100 family. sagEsxA-like subfamily. In terms of assembly, homodimer.

This is ESAT-6-like protein SAG0230 from Streptococcus agalactiae serotype V (strain ATCC BAA-611 / 2603 V/R).